A 135-amino-acid polypeptide reads, in one-letter code: HVA22-like protein d (135 aa).

Helical transmembrane passes span 11-31, 42-62, and 63-83; these read LHSGAGPIVMLLYPLYASVIA, QWLAYWIIYSFLSLTELILQS, and LIEWIPIWYTVKLVFVAWLVL.

The protein belongs to the DP1 family. As to expression, predominantly expressed in flower buds.

It localises to the membrane. The polypeptide is HVA22-like protein d (HVA22D) (Arabidopsis thaliana (Mouse-ear cress)).